Here is a 227-residue protein sequence, read N- to C-terminus: Ribose-5-phosphate isomerase A (227 aa).

Substrate is bound by residues 26–29 (TGST), 82–85 (DGAD), and 95–98 (KGGG). Glu104 (proton acceptor) is an active-site residue. Residue Lys122 participates in substrate binding.

The protein belongs to the ribose 5-phosphate isomerase family. In terms of assembly, homodimer.

The catalysed reaction is aldehydo-D-ribose 5-phosphate = D-ribulose 5-phosphate. It functions in the pathway carbohydrate degradation; pentose phosphate pathway; D-ribose 5-phosphate from D-ribulose 5-phosphate (non-oxidative stage): step 1/1. Functionally, catalyzes the reversible conversion of ribose-5-phosphate to ribulose 5-phosphate. The chain is Ribose-5-phosphate isomerase A from Streptococcus pyogenes serotype M2 (strain MGAS10270).